Reading from the N-terminus, the 224-residue chain is Large ribosomal subunit protein uL3 (224 aa).

Gln-159 carries the post-translational modification N5-methylglutamine.

Belongs to the universal ribosomal protein uL3 family. In terms of assembly, part of the 50S ribosomal subunit. Forms a cluster with proteins L14 and L19. Methylated by PrmB.

Functionally, one of the primary rRNA binding proteins, it binds directly near the 3'-end of the 23S rRNA, where it nucleates assembly of the 50S subunit. In Herminiimonas arsenicoxydans, this protein is Large ribosomal subunit protein uL3.